Here is a 366-residue protein sequence, read N- to C-terminus: Palmitoyltransferase ZDHHC2 (366 aa).

Over 1–15 (MAPSGSGGVRRRCRR) the chain is Cytoplasmic. Residues 16-36 (VLYWIPVVFISLLLGWSYYAY) traverse the membrane as a helical segment. The Lumenal portion of the chain corresponds to 37 to 47 (AIQLCIVSMEN). The helical transmembrane segment at 48-68 (IGEQVVCLMAYHLLFAMFVWS) threads the bilayer. Residues 69 to 169 (YWKTIFTLPM…NNCVGFSNYK (101 aa)) are Cytoplasmic-facing. Positions 126–176 (RYCDRCQLIKPDRCHHCSVCDKCILKMDHHCPWVNNCVGFSNYKFFLLFLA) constitute a DHHC domain. The S-palmitoyl cysteine intermediate role is filled by C156. A helical membrane pass occupies residues 170 to 190 (FFLLFLAYSLLYCLFIAATDL). The Lumenal segment spans residues 191–207 (QYFIRFWTNGLPDTQAK). The chain crosses the membrane as a helical span at residues 208 to 228 (FHIMFLFFAAAMFSVSLSSLF). At 229–366 (GYHCWLVSKN…NPALTMENET (138 aa)) the chain is on the cytoplasmic side. Residues 297–316 (VNQDPEQPSTPAGLNSTVKN) show a composition bias toward polar residues. Positions 297–366 (VNQDPEQPST…NPALTMENET (70 aa)) are disordered. The segment at 298–366 (NQDPEQPSTP…NPALTMENET (69 aa)) is mediates localization to plasma membrane and recycling endosomes. Over residues 326–336 (PLRESQSHLLK) the composition is skewed to basic and acidic residues. Positions 334-335 (LL) match the Non-canonical dileucine endocytic signal motif. The span at 337-347 (DSQTWTESSAN) shows a compositional bias: polar residues. Residues 357-360 (NPAL) carry the NPxY-like endocytic signal motif.

It belongs to the DHHC palmitoyltransferase family. As to quaternary structure, monomer. Homodimer. The monomeric form has a higher catalytic activity. In terms of processing, autopalmitoylated. As to expression, expressed in all brain regions.

Its subcellular location is the postsynaptic density. It localises to the postsynaptic recycling endosome membrane. The protein resides in the cell membrane. The protein localises to the endoplasmic reticulum membrane. It is found in the golgi apparatus membrane. It carries out the reaction L-cysteinyl-[protein] + hexadecanoyl-CoA = S-hexadecanoyl-L-cysteinyl-[protein] + CoA. The catalysed reaction is L-cysteinyl-[protein] + tetradecanoyl-CoA = S-tetradecanoyl-L-cysteinyl-[protein] + CoA. It catalyses the reaction L-cysteinyl-[protein] + octadecanoyl-CoA = S-octadecanoyl-L-cysteinyl-[protein] + CoA. In terms of biological role, palmitoyltransferase that catalyzes the addition of palmitate onto various protein substrates and is involved in a variety of cellular processes. Has no stringent fatty acid selectivity and in addition to palmitate can also transfer onto target proteins myristate from tetradecanoyl-CoA and stearate from octadecanoyl-CoA. In the nervous system, plays a role in long term synaptic potentiation by palmitoylating AKAP5 through which it regulates protein trafficking from the dendritic recycling endosomes to the plasma membrane and controls both structural and functional plasticity at excitatory synapses. In dendrites, mediates the palmitoylation of DLG4 when synaptic activity decreases and induces synaptic clustering of DLG4 and associated AMPA-type glutamate receptors. Also mediates the de novo and turnover palmitoylation of RGS7BP, a shuttle for Gi/o-specific GTPase-activating proteins/GAPs, promoting its localization to the plasma membrane in response to the activation of G protein-coupled receptors. Through the localization of these GTPase-activating proteins/GAPs, it also probably plays a role in G protein-coupled receptors signaling in neurons. Also probably plays a role in cell adhesion by palmitoylating CD9 and CD151 to regulate their expression and function. Palmitoylates the endoplasmic reticulum protein CKAP4 and regulates its localization to the plasma membrane. Could also palmitoylate LCK and regulate its localization to the plasma membrane. The polypeptide is Palmitoyltransferase ZDHHC2 (Mus musculus (Mouse)).